Reading from the N-terminus, the 131-residue chain is Sec-independent protein translocase protein TatB (131 aa).

Residues 2–22 (FANIGWWEMLVLVMVGLVVLG) traverse the membrane as a helical segment. The segment at 90 to 131 (DSLFTGDFDRPTPKKPDAAGSAGPDATEQIGAGPIPFDSDAT) is disordered. Residues 96 to 106 (DFDRPTPKKPD) show a composition bias toward basic and acidic residues.

This sequence belongs to the TatB family. The Tat system comprises two distinct complexes: a TatABC complex, containing multiple copies of TatA, TatB and TatC subunits, and a separate TatA complex, containing only TatA subunits. Substrates initially bind to the TatABC complex, which probably triggers association of the separate TatA complex to form the active translocon.

Its subcellular location is the cell membrane. Part of the twin-arginine translocation (Tat) system that transports large folded proteins containing a characteristic twin-arginine motif in their signal peptide across membranes. Together with TatC, TatB is part of a receptor directly interacting with Tat signal peptides. TatB may form an oligomeric binding site that transiently accommodates folded Tat precursor proteins before their translocation. The protein is Sec-independent protein translocase protein TatB of Mycobacterium tuberculosis (strain ATCC 25177 / H37Ra).